The primary structure comprises 223 residues: UPF0641 membrane protein PJ4664.05 (223 aa).

5 helical membrane passes run 10–30, 49–69, 81–101, 146–166, and 190–210; these read FNSF…FNWI, LTVL…FSDI, ILLY…WSIV, LSIG…MLWV, and TIFY…LKMV.

The protein belongs to the UPF0641 family.

It is found in the endoplasmic reticulum membrane. In Schizosaccharomyces pombe (strain 972 / ATCC 24843) (Fission yeast), this protein is UPF0641 membrane protein PJ4664.05.